The primary structure comprises 463 residues: Metalloprotease slr0863 (463 aa).

It belongs to the peptidase U62 family.

Its function is as follows. Probable metalloprotease. The protein is Metalloprotease slr0863 of Synechocystis sp. (strain ATCC 27184 / PCC 6803 / Kazusa).